Reading from the N-terminus, the 871-residue chain is Zinc finger protein 473 (871 aa).

One can recognise a KRAB domain in the interval 6–75; that stretch reads VTLKDVGMDF…AGGSPEATSP (70 aa). Disordered stretches follow at residues 47-81 and 140-164; these read PPRP…TETK and NGES…TVST. Polar residues predominate over residues 71–81; sequence EATSPDVTETK. Positions 145 to 154 are enriched in basic and acidic residues; that stretch reads TECKSHELKR. K148 participates in a covalent cross-link: Glycyl lysine isopeptide (Lys-Gly) (interchain with G-Cter in SUMO2). The segment at 209 to 231 adopts a C2H2-type 1 zinc-finger fold; it reads YQCSECGKSFSGSYRLTQHWITH. A C2H2-type 2; degenerate zinc finger spans residues 265-286; sequence YVCNEYGTTFSQSTYLWHQKTH. A compositionally biased stretch (basic and acidic residues) spans 290–317; the sequence is KPCKSQDSDHPPSHDTQPGEHQKTHTDS. The segment at 290 to 318 is disordered; it reads KPCKSQDSDHPPSHDTQPGEHQKTHTDSK. The tract at residues 312–552 is interaction with SLBP/pre-mRNA complex; sequence KTHTDSKSYN…GFFVSGKILD (241 aa). 3 consecutive C2H2-type zinc fingers follow at residues 320–342, 347–369, and 375–397; these read YNCN…QKIH, YECS…QKTH, and SECQ…QALH. The C2H2-type 6; degenerate zinc-finger motif lies at 403 to 425; it reads YKCNERGKSFRHNSTLKIHQRVH. Residue K419 forms a Glycyl lysine isopeptide (Lys-Gly) (interchain with G-Cter in SUMO2) linkage. 4 consecutive C2H2-type zinc fingers follow at residues 431-453, 459-481, 487-509, and 515-537; these read YKCS…RRIH, HKCQ…QAIH, YSCA…QKMH, and YECQ…ESVH. Residues K549 and K558 each participate in a glycyl lysine isopeptide (Lys-Gly) (interchain with G-Cter in SUMO2) cross-link. C2H2-type zinc fingers lie at residues 562 to 584 and 591 to 613; these read FKCN…ERIH and FECD…QRIH. K635 participates in a covalent cross-link: Glycyl lysine isopeptide (Lys-Gly) (interchain with G-Cter in SUMO2). 8 consecutive C2H2-type zinc fingers follow at residues 646-668, 674-696, 702-724, 730-752, 758-780, 786-808, 814-836, and 842-864; these read FKCN…QLIH, FKCS…ERTH, LVCN…QRIH, YVCD…QRIH, YVCQ…RRVH, YRCG…QRIH, YSCN…LRVH, and YQCQ…QRVH.

Belongs to the krueppel C2H2-type zinc-finger protein family. Interacts with the SLBP/pre-mRNA complex but not with SLBP alone. Interacts with LSM11 in a U7 snRNP-dependent manner.

The protein localises to the nucleus. Its function is as follows. Involved in histone 3'-end pre-mRNA processing by associating with U7 snRNP and interacting with SLBP/pre-mRNA complex. Increases histone 3'-end pre-mRNA processing but has no effect on U7 snRNP levels, when overexpressed. Required for cell cycle progression from G1 to S phases. The protein is Zinc finger protein 473 (ZNF473) of Homo sapiens (Human).